The chain runs to 244 residues: MNPVYSPVQPGAPYGNPKNMAYTGYPTAYPAAAPAYNPSLYPTNSPSYAPEFQFLHSAYATLLMKQAWPQNSSSCGTEGTFHLPVDTGTENRTYQASSAAFRYTAGTPYKVPPTQSNTAPPPYSPSPNPYQTAMYPIRSAYPQQNLYAQGAYYTQPVYAAQPHVIHHTTVVQPNSIPSAIYPAPVAAPRTNGVAMGMVAGTTMAMSAGTLLTTPQHTAIGAHPVSMPTYRAQGTPAYSYVPPHW.

Position 1 is an N-acetylmethionine (Met-1). At Arg-102 the chain carries Asymmetric dimethylarginine. The tract at residues 107–126 (TPYKVPPTQSNTAPPPYSPS) is disordered.

This sequence belongs to the FAM168 family. In terms of assembly, interacts with POLB. Interacts with AKT1 and MT1X. May interact with FAM168B.

Functionally, in cancer context, protects cells from induced-DNA damage and apoptosis. Acts, at least in part, through PI3K/AKT/NFKB signaling pathway and by preventing POLB degradation. Decreases POLB ubiquitation and stabilizes its protein levels. The sequence is that of Protein FAM168A (Fam168a) from Mus musculus (Mouse).